A 219-amino-acid polypeptide reads, in one-letter code: ATP phosphoribosyltransferase (219 aa).

The protein belongs to the ATP phosphoribosyltransferase family. Short subfamily. In terms of assembly, heteromultimer composed of HisG and HisZ subunits.

The protein resides in the cytoplasm. The enzyme catalyses 1-(5-phospho-beta-D-ribosyl)-ATP + diphosphate = 5-phospho-alpha-D-ribose 1-diphosphate + ATP. It participates in amino-acid biosynthesis; L-histidine biosynthesis; L-histidine from 5-phospho-alpha-D-ribose 1-diphosphate: step 1/9. Its function is as follows. Catalyzes the condensation of ATP and 5-phosphoribose 1-diphosphate to form N'-(5'-phosphoribosyl)-ATP (PR-ATP). Has a crucial role in the pathway because the rate of histidine biosynthesis seems to be controlled primarily by regulation of HisG enzymatic activity. This Clostridium kluyveri (strain NBRC 12016) protein is ATP phosphoribosyltransferase.